A 121-amino-acid polypeptide reads, in one-letter code: Ribonuclease P protein component (121 aa).

This sequence belongs to the RnpA family. As to quaternary structure, consists of a catalytic RNA component (M1 or rnpB) and a protein subunit.

The catalysed reaction is Endonucleolytic cleavage of RNA, removing 5'-extranucleotides from tRNA precursor.. In terms of biological role, RNaseP catalyzes the removal of the 5'-leader sequence from pre-tRNA to produce the mature 5'-terminus. It can also cleave other RNA substrates such as 4.5S RNA. The protein component plays an auxiliary but essential role in vivo by binding to the 5'-leader sequence and broadening the substrate specificity of the ribozyme. This chain is Ribonuclease P protein component, found in Bifidobacterium adolescentis (strain ATCC 15703 / DSM 20083 / NCTC 11814 / E194a).